The chain runs to 150 residues: Ribonuclease H (150 aa).

Positions 1 to 142 constitute an RNase H type-1 domain; that stretch reads MSDSVELFTD…ADQLANRGVD (142 aa). Residues D10, E48, D70, and D134 each contribute to the Mg(2+) site.

It belongs to the RNase H family. Monomer. The cofactor is Mg(2+).

It is found in the cytoplasm. It catalyses the reaction Endonucleolytic cleavage to 5'-phosphomonoester.. Its function is as follows. Endonuclease that specifically degrades the RNA of RNA-DNA hybrids. This Pseudomonas syringae pv. syringae (strain B728a) protein is Ribonuclease H.